The sequence spans 130 residues: Small ribosomal subunit protein uS9 (130 aa).

The tract at residues Val-111 to Arg-130 is disordered. The segment covering Val-116–Arg-130 has biased composition (basic residues).

This sequence belongs to the universal ribosomal protein uS9 family.

In Enterobacter sp. (strain 638), this protein is Small ribosomal subunit protein uS9.